The primary structure comprises 345 residues: MPQIRNDWTIEEVQNLLQMPLNDLVFEAQTVHRQHFNPNEVQVSTLLSIKTGACPEDCKYCPQSAHYHTGLDRERLMAVESVLAEAQAAKEKGASRFCMGAAWRNPKDRDMPYVIEMIKGVKALGLESCMTLGMLSNEQAKMLQQAGLDYYNHNLDTSPEFYGDIITTRTYQDRLNTLNNVRDAGMKVCAGGIVGMGESVTDRASLLVQLANLPKHPESVPINMLVKVEGTPFAKLEDLDNFEFVRTVAVARILMPASHVRLSAGREDMNDEMQALCFLAGANSIFYGEKLLTTANPEADADLRLFERLGIKPEQRDGYDDEVHTAVIEDAIKEQQNPVRYYDAS.

Residues 39-266 form the Radical SAM core domain; that stretch reads NEVQVSTLLS…ASHVRLSAGR (228 aa). Residues Cys-54, Cys-58, and Cys-61 each contribute to the [4Fe-4S] cluster site. Positions 98, 129, 189, and 261 each coordinate [2Fe-2S] cluster.

The protein belongs to the radical SAM superfamily. Biotin synthase family. In terms of assembly, homodimer. [4Fe-4S] cluster is required as a cofactor. The cofactor is [2Fe-2S] cluster.

The catalysed reaction is (4R,5S)-dethiobiotin + (sulfur carrier)-SH + 2 reduced [2Fe-2S]-[ferredoxin] + 2 S-adenosyl-L-methionine = (sulfur carrier)-H + biotin + 2 5'-deoxyadenosine + 2 L-methionine + 2 oxidized [2Fe-2S]-[ferredoxin]. Its pathway is cofactor biosynthesis; biotin biosynthesis; biotin from 7,8-diaminononanoate: step 2/2. In terms of biological role, catalyzes the conversion of dethiobiotin (DTB) to biotin by the insertion of a sulfur atom into dethiobiotin via a radical-based mechanism. The polypeptide is Biotin synthase (Idiomarina loihiensis (strain ATCC BAA-735 / DSM 15497 / L2-TR)).